A 339-amino-acid chain; its full sequence is Ketol-acid reductoisomerase (NADP(+)) (339 aa).

The 182-residue stretch at 1–182 (MRVYYDRDAD…GGGRAGVIET (182 aa)) folds into the KARI N-terminal Rossmann domain. NADP(+) is bound by residues 24-27 (YGSQ), R48, S51, T53, and 83-86 (DELQ). H108 is a catalytic residue. G134 is an NADP(+) binding site. The KARI C-terminal knotted domain occupies 183–328 (TFKEECETDL…EKLRAMMPWI (146 aa)). Mg(2+) contacts are provided by D191, E195, E227, and E231. A substrate-binding site is contributed by S252.

Belongs to the ketol-acid reductoisomerase family. It depends on Mg(2+) as a cofactor.

It catalyses the reaction (2R)-2,3-dihydroxy-3-methylbutanoate + NADP(+) = (2S)-2-acetolactate + NADPH + H(+). The enzyme catalyses (2R,3R)-2,3-dihydroxy-3-methylpentanoate + NADP(+) = (S)-2-ethyl-2-hydroxy-3-oxobutanoate + NADPH + H(+). Its pathway is amino-acid biosynthesis; L-isoleucine biosynthesis; L-isoleucine from 2-oxobutanoate: step 2/4. It participates in amino-acid biosynthesis; L-valine biosynthesis; L-valine from pyruvate: step 2/4. Functionally, involved in the biosynthesis of branched-chain amino acids (BCAA). Catalyzes an alkyl-migration followed by a ketol-acid reduction of (S)-2-acetolactate (S2AL) to yield (R)-2,3-dihydroxy-isovalerate. In the isomerase reaction, S2AL is rearranged via a Mg-dependent methyl migration to produce 3-hydroxy-3-methyl-2-ketobutyrate (HMKB). In the reductase reaction, this 2-ketoacid undergoes a metal-dependent reduction by NADPH to yield (R)-2,3-dihydroxy-isovalerate. This is Ketol-acid reductoisomerase (NADP(+)) from Xanthobacter autotrophicus (strain ATCC BAA-1158 / Py2).